The following is a 3430-amino-acid chain: MSKKPGGPGKNRAVNMLKRGMPRGLSLIGLKRAMLSLIDGKGPIRFVLALLAFFRFTAIAPTRAVLDRWRGVNKQTAMKHLLSFKKELGTLTSAINRRSTKQKKRGGTAGFTILLGLIACAGAVTLSNFQGKVMMTVNATDVTDVITIPTAAGKNLCIVRAMDVGYLCEDTITYECPVLAAGNDPEDIDCWCTKSSVYVRYGRCTKTRHSRRSRRSLTVQTHGESTLANKKGAWLDSTKATRYLVKTESWILRNPGYALVAAVIGWMLGSNTMQRVVFAILLLLVAPAYSFNCLGMSNRDFLEGVSGATWVDLVLEGDSCVTIMSKDKPTIDVKMMNMEAANLADVRSYCYLASVSDLSTRAACPTMGEAHNEKRADPAFVCKQGVVDRGWGNGCGLFGKGSIDTCAKFACTTKATGWIIQKENIKYEVAIFVHGPTTVESHGKIGATQAGRFSITPSAPSYTLKLGEYGEVTVDCEPRSGIDTSAYYVMSVGEKSFLVHREWFMDLNLPWSSAGSTTWRNRETLMEFEEPHATKQSVVALGSQEGALHQALAGAIPVEFSSNTVKLTSGHLKCRVKMEKLQLKGTTYGVCSKAFKFARTPADTGHGTVVLELQYTGTDGPCKVPISSVASLNDLTPVGRLVTVNPFVSVATANSKVLIELEPPFGDSYIVVGRGEQQINHHWHKSGSSIGKAFTTTLRGAQRLAALGDTAWDFGSVGGVFTSVGKAIHQVFGGAFRSLFGGMSWITQGLLGALLLWMGINARDRSIAMTFLAVGGVLLFLSVNVHADTGCAIDIGRQELRCGSGVFIHNDVEAWMDRYKFYPETPQGLAKIIQKAHAEGVCGLRSVSRLEHQMWEAIKDELNTLLKENGVDLSVVVEKQNGMYKAAPKRLAATTEKLEMGWKAWGKSIIFAPELANNTFVIDGPETEECPTANRAWNSMEVEDFGFGLTSTRMFLRIRETNTTECDSKIIGTAVKNNMAVHSDLSYWIESGLNDTWKLERAVLGEVKSCTWPETHTLWGDGVLESDLIIPITLAGPRSNHNRRPGYKTQNQGPWDEGRVEIDFDYCPGTTVTISDSCEHRGPAARTTTESGKLITDWCCRSCTLPPLRFQTENGCWYGMEIRPTRHDEKTLVQSRVNAYNADMIDPFQLGLMVVFLATQEVLRKRWTAKISIPAIMLALLVLVFGGITYTDVLRYVILVGAAFAEANSGGDVVHLALMATFKIQPVFLVASFLKARWTNQESILLMLAAAFFQMAYYDAKNVLSWEVPDVLNSLSVAWMILRAISFTNTSNVVVPLLALLTPGLKCLNLDVYRILLLMVGVGSLIKEKRSSAAKKKGACLICLALASTGVFNPMILAAGLMACDPNRKRGWPATEVMTAVGLMFAIVGGLAELDIDSMAIPMTIAGLMFAAFVISGKSTDMWIERTADITWESDAEITGSSERVDVRLDDDGNFQLMNDPGAPWKIWMLRMACLAISAYTPWAILPSVIGFWITLQYTKRGGVLWDTPSPKEYKKGDTTTGVYRIMTRGLLGSYQAGAGVMVEGVFHTLWHTTKGAALMSGEGRLDPYWGSVKEDRLCYGGPWKLQHKWNGHDEVQMIVVEPGKNVKNVQTKPGVFKTPEGEIGAVTLDYPTGTSGSPIVDKNGDVIGLYGNGVIMPNGSYISAIVQGERMEEPAPAGFEPEMLRKKQITVLDLHPGAGKTRKILPQIIKEAINKRLRTAVLAPTRVVAAEMSEALRGLPIRYQTSAVHREHSGNEIVDVMCHATLTHRLMSPHRVPNYNLFIMDEAHFTDPASIAARGYIATKVELGEAAAIFMTATPPGTSDPFPESNAPISDMQTEIPDRAWNTGYEWITEYVGKTVWFVPSVKMGNEIALCLQRAGKKVIQLNRKSYETEYPKCKNDDWDFVITTDISEMGANFKASRVIDSRKSVKPTIIEEGDGRVILGEPSAITAASAAQRRGRIGRNPSQVGDEYCYGGHTNEDDSNFAHWTEARIMLDNINMPNGLVAQLYQPEREKVYTMDGEYRLRGEERKNFLEFLRTADLPVWLAYKVAAAGISYHDRKWCFDGPRTNTILEDNNEVEVITKLGERKILRPRWADARVYSDHQALKSFKDFASGKRSQIGLVEVLGRMPEHFMVKTWEALDTMYVVATAEKGGRAHRMALEELPDALQTIVLIALLSVMSLGVFFLLMQRKGIGKIGLGGVILGAATFFCWMAEVPGTKIAGMLLLSLLLMIVLIPEPEKQRSQTDNQLAVFLICVLTLVGAVAANEMGWLDKTKNDIGSLLGHRPEARETTLGVESFLLDLRPATAWSLYAVTTAVLTPLLKHLITSDYINTSLTSINVQASALFTLARGFPFVDVGVSALLLAVGCWGQVTLTVTVTAAALLFCHYAYMVPGWQAEAMRSAQRRTAAGIMKNVVVDGIVATDVPELERTTPVMQKKVGQIILILVSMAAVVVNPSVRTVREAGILTTAAAVTLWENGASSVWNATTAIGLCHIMRGGWLSCLSIMWTLIKNMEKPGLKRGGAKGRTLGEVWKERLNHMTKEEFTRYRKEAITEVDRSAAKHARREGNITGGHPVSRGTAKLRWLVERRFLEPVGKVVDLGCGRGGWCYYMATQKRVQEVKGYTKGGPGHEEPQLVQSYGWNIVTMKSGVDVFYRPSEASDTLLCDIGESSSSAEVEEHRTVRVLEMVEDWLHRGPKEFCIKVLCPYMPKVIEKMETLQRRYGGGLIRNPLSRNSTHEMYWVSHASGNIVHSVNMTSQVLLGRMEKKTWKGPQFEEDVNLGSGTRAVGKPLLNSDTSKIKNRIERLKKEYSSTWHQDANHPYRTWNYHGSYEVKPTGSASSLVNGVVRLLSKPWDTITNVTTMAMTDTTPFGQQRVFKEKVDTKAPEPPEGVKYVLNETTNWLWAFLARDKKPRMCSREEFIGKVNSNAALGAMFEEQNQWKNAREAVEDPKFWEMVDEEREAHLRGECNTCIYNMMGKREKKPGEFGKAKGSRAIWFMWLGARFLEFEALGFLNEDHWLGRKNSGGGVEGLGLQKLGYILKEVGTKPGGKVYADDTAGWDTRITKADLENEAKVLELLDGEHRRLARSIIELTYRHKVVKVMRPAADGKTVMDVISREDQRGSGQVVTYALNTFTNLAVQLVRMMEGEGVIGPDDVEKLGKGKGPKVRTWLFENGEERLSRMAVSGDDCVVKPLDDRFATSLHFLNAMSKVRKDIQEWKPSTGWYDWQQVPFCSNHFTELIMKDGRTLVVPCRGQDELIGRARISPGAGWNVRDTACLAKSYAQMWLLLYFHRRDLRLMANAICSAVPANWVPTGRTTWSIHAKGEWMTTEDMLAVWNRVWIEENEWMEDKTPVERWSDVPYSGKREDIWCGSLIGTRTRATWAENIHVAINQVRSVIGEEKYVDYMSSLRRYEDTIVVEDTVL.

An interaction with host EXOC1 region spans residues 2–15 (SKKPGGPGKNRAVN). At 2 to 105 (SKKPGGPGKN…NRRSTKQKKR (104 aa)) the chain is on the cytoplasmic side. The segment at 37-72 (LIDGKGPIRFVLALLAFFRFTAIAPTRAVLDRWRGV) is hydrophobic; homodimerization of capsid protein C. Residues 106–123 (GGTAGFTILLGLIACAGA) constitute a propeptide, ER anchor for the capsid protein C, removed in mature form by serine protease NS3. A helical membrane pass occupies residues 106-126 (GGTAGFTILLGLIACAGAVTL). Over 127–248 (SNFQGKVMMT…KATRYLVKTE (122 aa)) the chain is Extracellular. N-linked (GlcNAc...) asparagine; by host glycosylation occurs at asparagine 138. Residues 249–269 (SWILRNPGYALVAAVIGWMLG) form a helical membrane-spanning segment. Over 270 to 275 (SNTMQR) the chain is Cytoplasmic. A helical membrane pass occupies residues 276-290 (VVFAILLLLVAPAYS). Topologically, residues 291–739 (FNCLGMSNRD…QVFGGAFRSL (449 aa)) are extracellular. Cystine bridges form between cysteine 293–cysteine 320, cysteine 350–cysteine 406, cysteine 364–cysteine 395, cysteine 382–cysteine 411, cysteine 476–cysteine 574, and cysteine 591–cysteine 622. The interval 388 to 401 (DRGWGNGCGLFGKG) is fusion peptide. Residues 740–760 (FGGMSWITQGLLGALLLWMGI) traverse the membrane as a helical segment. Residues 761–766 (NARDRS) lie on the Cytoplasmic side of the membrane. Residues 767-787 (IAMTFLAVGGVLLFLSVNVHA) traverse the membrane as a helical segment. Over 788 to 1212 (DTGCAIDIGR…AFAEANSGGD (425 aa)) the chain is Extracellular. 2 cysteine pairs are disulfide-bonded: cysteine 791-cysteine 802 and cysteine 842-cysteine 930. N-linked (GlcNAc...) asparagine; by host glycosylation is found at asparagine 917, asparagine 962, and asparagine 994. 4 disulfides stabilise this stretch: cysteine 966/cysteine 1010, cysteine 1067/cysteine 1116, cysteine 1078/cysteine 1099, and cysteine 1100/cysteine 1103. Residues 1213-1233 (VVHLALMATFKIQPVFLVASF) traverse the membrane as a helical segment. Topologically, residues 1234-1243 (LKARWTNQES) are cytoplasmic. Residues 1244–1264 (ILLMLAAAFFQMAYYDAKNVL) traverse the membrane as a helical segment. The Lumenal portion of the chain corresponds to 1265 to 1278 (SWEVPDVLNSLSVA). A helical transmembrane segment spans residues 1279-1299 (WMILRAISFTNTSNVVVPLLA). Topologically, residues 1300–1307 (LLTPGLKC) are cytoplasmic. A helical transmembrane segment spans residues 1308–1328 (LNLDVYRILLLMVGVGSLIKE). At 1329 to 1340 (KRSSAAKKKGAC) the chain is on the lumenal side. A helical membrane pass occupies residues 1341-1361 (LICLALASTGVFNPMILAAGL). Residues 1362–1371 (MACDPNRKRG) lie on the Cytoplasmic side of the membrane. Residues 1372-1392 (WPATEVMTAVGLMFAIVGGLA) traverse the membrane as a helical segment. At 1393–1395 (ELD) the chain is on the lumenal side. Residues 1396–1416 (IDSMAIPMTIAGLMFAAFVIS) form a helical membrane-spanning segment. The Cytoplasmic segment spans residues 1417 to 1473 (GKSTDMWIERTADITWESDAEITGSSERVDVRLDDDGNFQLMNDPGAPWKIWMLRMA). The interacts with and activates NS3 protease stretch occupies residues 1424-1463 (IERTADITWESDAEITGSSERVDVRLDDDGNFQLMNDPGA). An intramembrane region (helical) is located at residues 1474 to 1494 (CLAISAYTPWAILPSVIGFWI). At 1495-2170 (TLQYTKRGGV…RMALEELPDA (676 aa)) the chain is on the cytoplasmic side. The Peptidase S7 domain maps to 1502-1679 (GGVLWDTPSP…ERMEEPAPAG (178 aa)). Residues histidine 1552, aspartate 1576, and serine 1636 each act as charge relay system; for serine protease NS3 activity in the active site. The region spanning 1682 to 1838 (PEMLRKKQIT…ESNAPISDMQ (157 aa)) is the Helicase ATP-binding domain. The tract at residues 1686–1689 (RKKQ) is important for RNA-binding. Residue 1695–1702 (LHPGAGKT) participates in ATP binding. Positions 1786-1789 (DEAH) match the DEAH box motif. One can recognise a Helicase C-terminal domain in the interval 1849–2014 (GYEWITEYVG…GLVAQLYQPE (166 aa)). Lysine 1890 carries the N6-acetyllysine; by host modification. The regulates the ATPase activity of NS3 helicase stretch occupies residues 2165–2169 (EELPD). Residues 2171–2191 (LQTIVLIALLSVMSLGVFFLL) traverse the membrane as a helical segment. Over 2192–2196 (MQRKG) the chain is Lumenal. The helical intramembrane region spans 2197 to 2217 (IGKIGLGGVILGAATFFCWMA). Glutamate 2218 is a topological domain (lumenal). A helical transmembrane segment spans residues 2219–2239 (VPGTKIAGMLLLSLLLMIVLI). Topologically, residues 2240–2254 (PEPEKQRSQTDNQLA) are cytoplasmic. A helical membrane pass occupies residues 2255-2275 (VFLICVLTLVGAVAANEMGWL). Topologically, residues 2276–2309 (DKTKNDIGSLLGHRPEARETTLGVESFLLDLRPA) are lumenal. Residues 2310-2330 (TAWSLYAVTTAVLTPLLKHLI) constitute an intramembrane region (helical). Over 2331 to 2377 (TSDYINTSLTSINVQASALFTLARGFPFVDVGVSALLLAVGCWGQVT) the chain is Lumenal. The helical transmembrane segment at 2378 to 2398 (LTVTVTAAALLFCHYAYMVPG) threads the bilayer. At 2399–2441 (WQAEAMRSAQRRTAAGIMKNVVVDGIVATDVPELERTTPVMQK) the chain is on the cytoplasmic side. A helical membrane pass occupies residues 2442–2462 (KVGQIILILVSMAAVVVNPSV). Topologically, residues 2463-2467 (RTVRE) are lumenal. A helical transmembrane segment spans residues 2468 to 2488 (AGILTTAAAVTLWENGASSVW). The Cytoplasmic portion of the chain corresponds to 2489–3430 (NATTAIGLCH…DTIVVEDTVL (942 aa)). Residues 2526 to 2791 (GGAKGRTLGE…DVNLGSGTRA (266 aa)) enclose the mRNA cap 0-1 NS5-type MT domain. Serine 2581 lines the S-adenosyl-L-methionine pocket. Serine 2581 carries the phosphoserine modification. The For 2'-O-MTase activity role is filled by lysine 2586. Positions 2611, 2612, 2629, 2630, 2656, and 2657 each coordinate S-adenosyl-L-methionine. Aspartate 2671 serves as the catalytic For 2'-O-MTase activity. Isoleucine 2672 lines the S-adenosyl-L-methionine pocket. Residues lysine 2707 and glutamate 2743 each act as for 2'-O-MTase activity in the active site. Tyrosine 2745 is an S-adenosyl-L-methionine binding site. The short motif at 2914–2916 (RDK) is the Nuclear localization signal element. Residues glutamate 2965, histidine 2969, cysteine 2974, and cysteine 2977 each coordinate Zn(2+). Positions 3055-3207 (GKVYADDTAG…KPLDDRFATS (153 aa)) constitute a RdRp catalytic domain. Residues histidine 3242, cysteine 3258, and cysteine 3377 each coordinate Zn(2+). The PDZ-binding motif lies at 3428–3430 (TVL).

The protein in the N-terminal section; belongs to the class I-like SAM-binding methyltransferase superfamily. mRNA cap 0-1 NS5-type methyltransferase family. In terms of assembly, homodimer. Interacts (via N-terminus) with host EXOC1 (via C-terminus); this interaction results in EXOC1 degradation through the proteasome degradation pathway. Interacts with host DDX56; this interaction plays an important role in genomic RNA encapsidation. Forms heterodimers with envelope protein E in the endoplasmic reticulum and Golgi. As to quaternary structure, homodimer; in the endoplasmic reticulum and Golgi. In terms of assembly, homodimer; Homohexamer when secreted. Interacts with envelope protein E. NS1 interacts with NS4B. Interacts with host complement protein CFH; this interaction leads to the degradation of C3. Interacts (via N-terminus) with serine protease NS3. As to quaternary structure, forms a heterodimer with serine protease NS3. May form homooligomers. In terms of assembly, forms a heterodimer with NS2B. Interacts with NS4B. Interacts with unphosphorylated RNA-directed RNA polymerase NS5; this interaction stimulates RNA-directed RNA polymerase NS5 guanylyltransferase activity. Interacts with Serine protease/Helicase NS3. Interacts with NS1. As to quaternary structure, homodimer. Interacts with host STAT2; this interaction inhibits the phosphorylation of the latter, and, when all viral proteins are present (polyprotein), targets STAT2 for degradation. Interacts with host PAF1 complex. Specific enzymatic cleavages in vivo yield mature proteins. Cleavages in the lumen of endoplasmic reticulum are performed by host signal peptidase, whereas cleavages in the cytoplasmic side are performed by serine protease NS3. Signal cleavage at the 2K-4B site requires a prior NS3 protease-mediated cleavage at the 4A-2K site. In terms of processing, cleaved in post-Golgi vesicles by a host furin, releasing the mature small envelope protein M, and peptide pr. This cleavage is incomplete as up to 30% of viral particles still carry uncleaved prM. Post-translationally, not N-glycosylated. N-glycosylated. The excreted form is glycosylated and this is required for efficient secretion of the protein from infected cells. In terms of processing, acetylated by host KAT5. Acetylation modulates NS3 RNA-binding and unwinding activities and plays an important positive role for viral replication. Post-translationally, phosphorylated on serines residues. This phosphorylation may trigger NS5 nuclear localization.

It is found in the virion. Its subcellular location is the host nucleus. The protein localises to the host cytoplasm. It localises to the host perinuclear region. The protein resides in the secreted. It is found in the virion membrane. Its subcellular location is the host endoplasmic reticulum membrane. The catalysed reaction is Selective hydrolysis of -Xaa-Xaa-|-Yaa- bonds in which each of the Xaa can be either Arg or Lys and Yaa can be either Ser or Ala.. It carries out the reaction RNA(n) + a ribonucleoside 5'-triphosphate = RNA(n+1) + diphosphate. It catalyses the reaction a ribonucleoside 5'-triphosphate + H2O = a ribonucleoside 5'-diphosphate + phosphate + H(+). The enzyme catalyses ATP + H2O = ADP + phosphate + H(+). The catalysed reaction is a 5'-end (5'-triphosphoguanosine)-ribonucleoside in mRNA + S-adenosyl-L-methionine = a 5'-end (N(7)-methyl 5'-triphosphoguanosine)-ribonucleoside in mRNA + S-adenosyl-L-homocysteine. It carries out the reaction a 5'-end (N(7)-methyl 5'-triphosphoguanosine)-ribonucleoside in mRNA + S-adenosyl-L-methionine = a 5'-end (N(7)-methyl 5'-triphosphoguanosine)-(2'-O-methyl-ribonucleoside) in mRNA + S-adenosyl-L-homocysteine + H(+). Plays a role in virus budding by binding to the cell membrane and gathering the viral RNA into a nucleocapsid that forms the core of a mature virus particle. During virus entry, may induce genome penetration into the host cytoplasm after hemifusion induced by the surface proteins. Can migrate to the cell nucleus where it modulates host functions. Overcomes the anti-viral effects of host EXOC1 by sequestering and degrading the latter through the proteasome degradation pathway. Its function is as follows. Inhibits RNA silencing by interfering with host Dicer. In terms of biological role, prevents premature fusion activity of envelope proteins in trans-Golgi by binding to envelope protein E at pH6.0. After virion release in extracellular space, gets dissociated from E dimers. Functionally, acts as a chaperone for envelope protein E during intracellular virion assembly by masking and inactivating envelope protein E fusion peptide. prM is the only viral peptide matured by host furin in the trans-Golgi network probably to avoid catastrophic activation of the viral fusion activity in acidic Golgi compartment prior to virion release. prM-E cleavage is inefficient, and many virions are only partially matured. These uncleaved prM would play a role in immune evasion. May play a role in virus budding. Exerts cytotoxic effects by activating a mitochondrial apoptotic pathway through M ectodomain. May display a viroporin activity. Its function is as follows. Binds to host cell surface receptor and mediates fusion between viral and cellular membranes. Envelope protein is synthesized in the endoplasmic reticulum in the form of heterodimer with protein prM. They play a role in virion budding in the ER, and the newly formed immature particle is covered with 60 spikes composed of heterodimer between precursor prM and envelope protein E. The virion is transported to the Golgi apparatus where the low pH causes dissociation of PrM-E heterodimers and formation of E homodimers. prM-E cleavage is inefficient, and many virions are only partially matured. These uncleaved prM would play a role in immune evasion. In terms of biological role, involved in immune evasion, pathogenesis and viral replication. Once cleaved off the polyprotein, is targeted to three destinations: the viral replication cycle, the plasma membrane and the extracellular compartment. Essential for viral replication. Required for formation of the replication complex and recruitment of other non-structural proteins to the ER-derived membrane structures. Excreted as a hexameric lipoparticle that plays a role against host immune response. Antagonizing the complement function. Binds to the host macrophages and dendritic cells. Inhibits signal transduction originating from Toll-like receptor 3 (TLR3). Functionally, component of the viral RNA replication complex that functions in virion assembly and antagonizes the host alpha/beta interferon antiviral response. Required cofactor for the serine protease function of NS3. May have membrane-destabilizing activity and form viroporins. Its function is as follows. Displays three enzymatic activities: serine protease, NTPase and RNA helicase. NS3 serine protease, in association with NS2B, performs its autocleavage and cleaves the polyprotein at dibasic sites in the cytoplasm: C-prM, NS2A-NS2B, NS2B-NS3, NS3-NS4A, NS4A-2K and NS4B-NS5. NS3 RNA helicase binds RNA and unwinds dsRNA in the 3' to 5' direction. NS3 supports the separation of RNA daughter and template strands during viral replication. The helicase part is involved in the inhibition of phosphorylation of host STAT1, and thereby inhibition of host type-I IFN signaling. In addition, NS3 assists the initiation of replication by unwinding the RNA secondary structure in the 3' non-translated region (NTR). Inhibits STAT2 translocation in the nucleus after IFN-alpha treatment. In terms of biological role, regulates the ATPase activity of the NS3 helicase activity. NS4A allows NS3 helicase to conserve energy during unwinding. Functionally, functions as a signal peptide for NS4B and is required for the interferon antagonism activity of the latter. Induces the formation of ER-derived membrane vesicles where the viral replication takes place. Inhibits interferon (IFN)-induced host STAT1 phosphorylation and nuclear translocation, thereby preventing the establishment of cellular antiviral state by blocking the IFN-alpha/beta pathway. Inhibits STAT2 translocation in the nucleus after IFN-alpha treatment. Its function is as follows. Replicates the viral (+) and (-) RNA genome, and performs the capping of genomes in the cytoplasm. NS5 methylates viral RNA cap at guanine N-7 and ribose 2'-O positions. Besides its role in RNA genome replication, also prevents the establishment of cellular antiviral state by blocking the interferon-alpha/beta (IFN-alpha/beta) signaling pathway. Inhibits host TYK2 and STAT2 phosphorylation, thereby preventing activation of JAK-STAT signaling pathway. This is Genome polyprotein from Aedes (Tropical bont tick).